We begin with the raw amino-acid sequence, 208 residues long: N-(5'-phosphoribosyl)anthranilate isomerase (208 aa).

Belongs to the TrpF family.

It catalyses the reaction N-(5-phospho-beta-D-ribosyl)anthranilate = 1-(2-carboxyphenylamino)-1-deoxy-D-ribulose 5-phosphate. Its pathway is amino-acid biosynthesis; L-tryptophan biosynthesis; L-tryptophan from chorismate: step 3/5. The polypeptide is N-(5'-phosphoribosyl)anthranilate isomerase (trpF) (Pyrobaculum aerophilum (strain ATCC 51768 / DSM 7523 / JCM 9630 / CIP 104966 / NBRC 100827 / IM2)).